Reading from the N-terminus, the 602-residue chain is Peptide-N(4)-(N-acetyl-beta-glucosaminyl)asparagine amidase (602 aa).

The Thioredoxin domain occupies 2–130 (PVREVSRLPE…EKKFLERFVG (129 aa)). Zn(2+) is bound by residues C189, C192, C222, and C225. C248 serves as the catalytic Nucleophile. Residues H275 and D292 contribute to the active site. The PAW domain maps to 400-602 (DMGGRTTGSK…ESMVVRVYMK (203 aa)).

Belongs to the transglutaminase-like superfamily. PNGase family. Requires Zn(2+) as cofactor.

Its subcellular location is the cytoplasm. The protein localises to the endoplasmic reticulum. It carries out the reaction Hydrolysis of an N(4)-(acetyl-beta-D-glucosaminyl)asparagine residue in which the glucosamine residue may be further glycosylated, to yield a (substituted) N-acetyl-beta-D-glucosaminylamine and a peptide containing an aspartate residue.. Specifically deglycosylates the denatured form of N-linked glycoproteins in the cytoplasm and assists their proteasome-mediated degradation. Cleaves the beta-aspartyl-glucosamine (GlcNAc) of the glycan and the amide side chain of Asn, converting Asn to Asp. Prefers proteins containing high-mannose over those bearing complex type oligosaccharides. Can recognize misfolded proteins in the endoplasmic reticulum that are exported to the cytosol to be destroyed and deglycosylate them, while it has no activity toward native proteins. Deglycosylation is a prerequisite for subsequent proteasome-mediated degradation of some, but not all, misfolded glycoproteins. Also displays oxidoreductase (thioredoxin) activity. This Caenorhabditis briggsae protein is Peptide-N(4)-(N-acetyl-beta-glucosaminyl)asparagine amidase (png-1).